Reading from the N-terminus, the 464-residue chain is Cell division protein FtsA (464 aa).

Residues 392-464 (EVIESDKDSE…FKKLMKSLFE (73 aa)) form a disordered region. The span at 416 to 455 (KKENDEVAPEAPREESYEDRENHLEDEQQTEGKAKEESKF) shows a compositional bias: basic and acidic residues.

The protein belongs to the FtsA/MreB family. In terms of assembly, self-interacts. Interacts with FtsZ.

The protein resides in the cell membrane. Functionally, cell division protein that is involved in the assembly of the Z ring. May serve as a membrane anchor for the Z ring. This is Cell division protein FtsA from Staphylococcus epidermidis (strain ATCC 35984 / DSM 28319 / BCRC 17069 / CCUG 31568 / BM 3577 / RP62A).